A 205-amino-acid polypeptide reads, in one-letter code: Probable GTP-binding protein EngB (205 aa).

An EngB-type G domain is found at 29–203 (QGAEIAFIGR…KAVLSQWFRS (175 aa)). GTP is bound by residues 37-44 (GRSNAGKS), 64-68 (GRTQM), 82-85 (DLPG), 149-152 (TKSD), and 182-184 (FSS). The Mg(2+) site is built by Ser44 and Thr66.

This sequence belongs to the TRAFAC class TrmE-Era-EngA-EngB-Septin-like GTPase superfamily. EngB GTPase family. Mg(2+) serves as cofactor.

Its function is as follows. Necessary for normal cell division and for the maintenance of normal septation. This is Probable GTP-binding protein EngB from Coxiella burnetii (strain RSA 493 / Nine Mile phase I).